Consider the following 53-residue polypeptide: UPF0391 membrane protein ESA_03375 (53 aa).

Helical transmembrane passes span 4 to 24 (WGII…GGLA) and 28 to 48 (AGAA…SLFM).

The protein belongs to the UPF0391 family.

The protein localises to the cell membrane. This chain is UPF0391 membrane protein ESA_03375, found in Cronobacter sakazakii (strain ATCC BAA-894) (Enterobacter sakazakii).